We begin with the raw amino-acid sequence, 199 residues long: Holliday junction branch migration complex subunit RuvA (199 aa).

Residues 1–64 (MIGRLRGILL…DDAHLLYAFA (64 aa)) form a domain I region. The segment at 65–143 (SEKERGLFRS…DMPESGVAGM (79 aa)) is domain II. The tract at residues 144-150 (RPDRVDG) is flexible linker. The segment at 151–199 (SAPGTVAEAVSALVALGYKPNEASRAVRRLDTEALTTEEIIRQALQRML) is domain III.

It belongs to the RuvA family. In terms of assembly, homotetramer. Forms an RuvA(8)-RuvB(12)-Holliday junction (HJ) complex. HJ DNA is sandwiched between 2 RuvA tetramers; dsDNA enters through RuvA and exits via RuvB. An RuvB hexamer assembles on each DNA strand where it exits the tetramer. Each RuvB hexamer is contacted by two RuvA subunits (via domain III) on 2 adjacent RuvB subunits; this complex drives branch migration. In the full resolvosome a probable DNA-RuvA(4)-RuvB(12)-RuvC(2) complex forms which resolves the HJ.

It is found in the cytoplasm. The RuvA-RuvB-RuvC complex processes Holliday junction (HJ) DNA during genetic recombination and DNA repair, while the RuvA-RuvB complex plays an important role in the rescue of blocked DNA replication forks via replication fork reversal (RFR). RuvA specifically binds to HJ cruciform DNA, conferring on it an open structure. The RuvB hexamer acts as an ATP-dependent pump, pulling dsDNA into and through the RuvAB complex. HJ branch migration allows RuvC to scan DNA until it finds its consensus sequence, where it cleaves and resolves the cruciform DNA. In Nitrosococcus oceani (strain ATCC 19707 / BCRC 17464 / JCM 30415 / NCIMB 11848 / C-107), this protein is Holliday junction branch migration complex subunit RuvA.